Consider the following 190-residue polypeptide: Shikimate kinase (190 aa).

An ATP-binding site is contributed by 19 to 24 (GSGKTT). T23 lines the Mg(2+) pocket. Substrate-binding residues include D41, R65, and G87. R124 contributes to the ATP binding site. R143 contributes to the substrate binding site.

It belongs to the shikimate kinase family. In terms of assembly, monomer. Requires Mg(2+) as cofactor.

The protein resides in the cytoplasm. It catalyses the reaction shikimate + ATP = 3-phosphoshikimate + ADP + H(+). It participates in metabolic intermediate biosynthesis; chorismate biosynthesis; chorismate from D-erythrose 4-phosphate and phosphoenolpyruvate: step 5/7. Its function is as follows. Catalyzes the specific phosphorylation of the 3-hydroxyl group of shikimic acid using ATP as a cosubstrate. This chain is Shikimate kinase, found in Synechococcus sp. (strain ATCC 27144 / PCC 6301 / SAUG 1402/1) (Anacystis nidulans).